The following is a 923-amino-acid chain: Dynein axonemal intermediate chain 3 (923 aa).

The interval 1 to 35 is disordered; that stretch reads MAPKPPKSPKGQKKGKKNMKQQLLVPEEEEPMNME. The segment covering 10–19 has biased composition (basic residues); sequence KGQKKGKKNM. 4 WD repeats span residues 398–438, 480–536, 702–741, and 745–785; these read ESPD…DRIE, GHRK…PAVT, VHDGAVHTIQRSPFFNDIVLTVGGWNVAIWKEEVMTGPLL, and CGPK…HEPA. A coiled-coil region spans residues 869-889; sequence LELVKKKAKIYQKTKEQMEAE.

Interacts with ACTR2; this interaction reduces binding of the Arp2/3 complex to the VCA domain of nucleation promoting factors. Part of the multisubunit axonemal dynein complex formed at least of two heavy chains and a number of intermediate and light chains. Found in a associated with the catalytic heavy chain DNAH2, the intermediate chain DNAI4, and the light chain DYNLT1. As to expression, strongly expressed in the testes. Detected also in brain and lung tissues.

Its subcellular location is the cytoplasm. Acts as a negative regulator of cell migration, invasion, and metastasis downstream of p53/TP53, through inhibition of Arp2/3 complex-mediated actin polymerization. Via its association with the multisubunit axonemal dynein complex, is potentially involved in the regulation of cilia function. May play a role in osteogenesis of dental tissue-derived mesenchymal stem cells. The polypeptide is Dynein axonemal intermediate chain 3 (Dnai3) (Mus musculus (Mouse)).